A 260-amino-acid polypeptide reads, in one-letter code: Large ribosomal subunit protein uL30 (260 aa).

Met1 carries the post-translational modification N-acetylmethionine. Repeat copies occupy residues 7-18 (KKKKVAAALGTL), 19-30 (KKKKVPAVPETL), 31-42 (KKKRRNFAELKV), 43-54 (KRLRKKFALKTL), and 55-66 (RKARRKLIYEKA). The interval 7–66 (KKKKVAAALGTLKKKKVPAVPETLKKKRRNFAELKVKRLRKKFALKTLRKARRKLIYEKA) is 5 X 12 AA tandem repeats. Thr29 carries the phosphothreonine modification. The residue at position 136 (Lys136) is an N6-acetyllysine. Lys139 carries the post-translational modification N6-succinyllysine. Residue Tyr151 is modified to Phosphotyrosine.

The protein belongs to the universal ribosomal protein uL30 family. As to quaternary structure, component of the large ribosomal subunit. Homodimer. Interacts with DHX33.

The protein localises to the cytoplasm. Functionally, component of the large ribosomal subunit. The ribosome is a large ribonucleoprotein complex responsible for the synthesis of proteins in the cell. Binds to G-rich structures in 28S rRNA and in mRNAs. Plays a regulatory role in the translation apparatus; inhibits cell-free translation of mRNAs. The chain is Large ribosomal subunit protein uL30 (Rpl7) from Rattus norvegicus (Rat).